The following is a 251-amino-acid chain: tRNA (guanine-N(7)-)-methyltransferase (251 aa).

Residues 1 to 43 form a disordered region; sequence MQPNEQPGTGPADTTLEQQDTAAAEVGHPRRIRSFVRRAGRTS. The span at 29–40 shows a compositional bias: basic residues; the sequence is PRRIRSFVRRAG. The S-adenosyl-L-methionine site is built by glutamate 82, glutamate 107, aspartate 134, and aspartate 157. The active site involves aspartate 157. Residue lysine 161 participates in substrate binding. Residues 163 to 168 are interaction with RNA; it reads RHNKRR. Substrate contacts are provided by residues aspartate 193 and 228-231; that span reads TKFE.

Belongs to the class I-like SAM-binding methyltransferase superfamily. TrmB family.

It carries out the reaction guanosine(46) in tRNA + S-adenosyl-L-methionine = N(7)-methylguanosine(46) in tRNA + S-adenosyl-L-homocysteine. It functions in the pathway tRNA modification; N(7)-methylguanine-tRNA biosynthesis. Catalyzes the formation of N(7)-methylguanine at position 46 (m7G46) in tRNA. In Ralstonia nicotianae (strain ATCC BAA-1114 / GMI1000) (Ralstonia solanacearum), this protein is tRNA (guanine-N(7)-)-methyltransferase.